The chain runs to 319 residues: Probable cytochrome c oxidase subunit 2 (319 aa).

A signal peptide spans 1–33; it reads MSPNGSDRSPRRPMRRKLLQALTAGLVLATATG. The next 2 helical transmembrane spans lie at 63-83 and 101-121; these read WAAA…SVFF and LPIE…LFYF. Residues H227, C262, C266, and H270 each coordinate Cu cation.

The protein belongs to the cytochrome c oxidase subunit 2 family. Cu cation is required as a cofactor. It depends on heme as a cofactor.

The protein localises to the cell membrane. It catalyses the reaction 4 Fe(II)-[cytochrome c] + O2 + 8 H(+)(in) = 4 Fe(III)-[cytochrome c] + 2 H2O + 4 H(+)(out). In terms of biological role, subunits I and II form the functional core of the enzyme complex. Electrons originating in cytochrome c are transferred via heme a and Cu(A) to the binuclear center formed by heme a3 and Cu(B). In Streptomyces coelicolor (strain ATCC BAA-471 / A3(2) / M145), this protein is Probable cytochrome c oxidase subunit 2 (ctaC).